Consider the following 394-residue polypeptide: Nicotinate phosphoribosyltransferase (394 aa).

Position 218 is a phosphohistidine; by autocatalysis (histidine 218).

Belongs to the NAPRTase family. Post-translationally, transiently phosphorylated on a His residue during the reaction cycle. Phosphorylation strongly increases the affinity for substrates and increases the rate of nicotinate D-ribonucleotide production. Dephosphorylation regenerates the low-affinity form of the enzyme, leading to product release.

The catalysed reaction is nicotinate + 5-phospho-alpha-D-ribose 1-diphosphate + ATP + H2O = nicotinate beta-D-ribonucleotide + ADP + phosphate + diphosphate. The protein operates within cofactor biosynthesis; NAD(+) biosynthesis; nicotinate D-ribonucleotide from nicotinate: step 1/1. In terms of biological role, catalyzes the synthesis of beta-nicotinate D-ribonucleotide from nicotinate and 5-phospho-D-ribose 1-phosphate at the expense of ATP. The protein is Nicotinate phosphoribosyltransferase of Xylella fastidiosa (strain 9a5c).